The primary structure comprises 205 residues: Thymidylate kinase (205 aa).

ATP is bound at residue 11 to 18 (GPEGSGKT).

This sequence belongs to the thymidylate kinase family.

The enzyme catalyses dTMP + ATP = dTDP + ADP. Its function is as follows. Phosphorylation of dTMP to form dTDP in both de novo and salvage pathways of dTTP synthesis. This Clostridium novyi (strain NT) protein is Thymidylate kinase.